The following is a 649-amino-acid chain: tRNA-guanine(15) transglycosylase (649 aa).

Catalysis depends on Asp-88, which acts as the Nucleophile. Substrate is bound by residues Asp-123 and Ala-194. Zn(2+)-binding residues include Cys-280, Cys-282, and Cys-285. The region spanning 573 to 648 is the PUA domain; the sequence is KYRIVIDSSV…VAVTLRGGLK (76 aa).

This sequence belongs to the archaeosine tRNA-ribosyltransferase family. Requires Zn(2+) as cofactor.

The enzyme catalyses guanosine(15) in tRNA + 7-cyano-7-deazaguanine = 7-cyano-7-carbaguanosine(15) in tRNA + guanine. It participates in tRNA modification; archaeosine-tRNA biosynthesis. Exchanges the guanine residue with 7-cyano-7-deazaguanine (preQ0) at position 15 in the dihydrouridine loop (D-loop) of archaeal tRNAs. This chain is tRNA-guanine(15) transglycosylase, found in Methanococcus maripaludis (strain C7 / ATCC BAA-1331).